Here is a 1269-residue protein sequence, read N- to C-terminus: MVEPGQDLLLAALSESGISPNDLFDVDGGDAGLATPTPPSVQQQQPPSTTTFVLNQINQLPTLGSTIVMTKTPPATTNRQTITLTKFIQTTANTRPSVSAPAVRNAIPPAPAKDQVQLKDLLKNNSLNELMKLKPPANIAQPVATAAADVSNGAVKKESSNKEVARVWINDMKMRSFSPTMKVPVVREEDEPEEEDEEEMGHAETYAEYMPIKLKIGLRHPDAVVETSSLSSVTPPDVWYKTSISEETIDNGWLSALQLEAVTYAAQQHETFLPNGDRAGFLIGDGAGVGKGRTIAGIIYENYLLSRKRALWFSVSNDLKYDAERDLRDIGAKNILVHSLNKFKYGKISSKHNGSVKKGVIFATYSSLIGESQSGGKYKTRLKQLLHWCGDDFDGVIVFDECHKAKNLCPVGSSKPTKTGLAVLELQNKLPKARVVYASATGASEPRNMAYMNRLGIWGEGTPFREFSDFIQAVERRGVGAMEIVAMDMKLRGMYIARQLSFTGVTFKIEEVLLSQSYVKMYNKAVKLWVIARERFQQAADLIDAEQRMKKSMWGQFWSAHQRFFKYLCIASKVKRVVQLAREEIKNGKCVVIGLQSTGEARTLEALEEGGGELNDFVSTAKGVLQSLIEKHFPAPDRKKLYSLLGIDLTAPSNNSSPRDSAKKARKIGGLTGSSSDDSGSESDVSDNEESDYESSKNMSSGDDDDFNPFRDDNSSLITSQDAVERAQQMKKDLLDKLEKLAEDLPPNTLDELIDELGGPENVAEMTGRKGRVVSNDDGSISYESRSELDVPVEILNITEKQRFMDGDKNIAIISEAASSGISLQADRRAKNQRRRVHMTLELPWSADRAIQQFGRTHRSNQVTAPEYVFLISELAGEQRFASIVAKRLESLGALTHGDRRATESRDLSRFNFDNKYGRNALEIVMKSIVNLDSPMVSPPPDYPGEFFKDVRQGLIGVGLINVEDRSGILTLDKDYNNIGKFLNRILGMEVHQQNALFQYFADTLTAVVQNAKKNGRYDMGILDLGSGDEKVRKSDVKKFLTPGYSTSGHVELYTISVERGMSWDEATKIWAELTGPDDGFYLSLQIRNNKKTAILVKEVNPKKKLFLIYRPNTGKQLKLEIYADLKKKYKKVVSDDALVHWLDQYNSSADTCTHAYWRGNCKKASLGLVCEIGLRCRTYYVLCGSVLSVWTKVEGVLASVSGTNVKMQIVRLRTEDGQRIVGLIIPANCVSPLVNLLSTSDQSQQLAVQQKQLWQQHHPQSITNLSNV.

A disordered region spans residues 21–47; sequence NDLFDVDGGDAGLATPTPPSVQQQQPP. At K113 the chain carries N6-acetyllysine. A phosphoserine mark is found at S126 and S178. Position 377 is an N6-acetyllysine (K377). A disordered region spans residues 652 to 725; the sequence is PSNNSSPRDS…SLITSQDAVE (74 aa). A phosphoserine mark is found at S656, S657, and S661. The segment covering 679–693 has biased composition (acidic residues); that stretch reads SGSESDVSDNEESDY. Phosphoserine is present on residues S700 and S701. Positions 719-746 form a coiled coil; that stretch reads TSQDAVERAQQMKKDLLDKLEKLAEDLP. Position 1098 is an N6-acetyllysine (K1098). S1262 carries the phosphoserine modification.

The protein belongs to the SBNO family.

The protein resides in the nucleus. Functionally, plays a crucial role in the regulation of neural stem cells (NSCs) proliferation. Enhances the phosphorylation of GSK3B through the PI3K-Akt signaling pathway, thereby upregulating the Wnt/beta-catenin signaling pathway and promoting the proliferation of NSCs. Improves ischemic stroke recovery while inhibiting neuroinflammation through small extracellular vesicles (sEVs)-mediated mechanism. Enhances the secretion of sEVs from NSCs, which in turn inhibit both the MAPK and NF-kappaB pathways in microglia. This inhibition suppresses the pro-inflammatory M1 polarization of microglia, promoting a shift towards the M2 anti-inflammatory phenotype, which is beneficial for reducing neuroinflammation. The polypeptide is Protein strawberry notch homolog 1 (Sbno1) (Rattus norvegicus (Rat)).